A 199-amino-acid polypeptide reads, in one-letter code: FMN-dependent NADH:quinone oxidoreductase 1 (199 aa).

FMN is bound by residues Ser-10, Ser-17–Ser-19, and Met-87–Phe-90.

This sequence belongs to the azoreductase type 1 family. As to quaternary structure, homodimer. It depends on FMN as a cofactor.

It carries out the reaction 2 a quinone + NADH + H(+) = 2 a 1,4-benzosemiquinone + NAD(+). It catalyses the reaction N,N-dimethyl-1,4-phenylenediamine + anthranilate + 2 NAD(+) = 2-(4-dimethylaminophenyl)diazenylbenzoate + 2 NADH + 2 H(+). In terms of biological role, quinone reductase that provides resistance to thiol-specific stress caused by electrophilic quinones. Functionally, also exhibits azoreductase activity. Catalyzes the reductive cleavage of the azo bond in aromatic azo compounds to the corresponding amines. The sequence is that of FMN-dependent NADH:quinone oxidoreductase 1 from Mesoplasma florum (strain ATCC 33453 / NBRC 100688 / NCTC 11704 / L1) (Acholeplasma florum).